Consider the following 177-residue polypeptide: Putative acetyltransferase FG08082 (177 aa).

In terms of domain architecture, N-acetyltransferase spans 81–174 (EEWEQVGLVR…VSIAMVEGPG (94 aa)).

Belongs to the acetyltransferase family.

Its pathway is mycotoxin biosynthesis. Its function is as follows. Putative acetyltransferase; part of the gene cluster that mediates the biosynthesis of butenolide, a mycotoxin that shows antibiotic activity but does not seem to play a major role in the spread of head blight in wheat. Butenolide is derived from glutamic acid via a 4-acetamido-2-butenoic acid intermediate. The predicted function of the NADH:flavin oxidoreductase FG08077, the cytochrome P450 monooxygenase FG08079, the decarboxylase FG08083, and the putative acetyltransferase FG08082 are consistent with this pathway, however, the respective activities of the butelonide biosynthesis cluster enzymes have still to be experimentally determined. This is Putative acetyltransferase FG08082 from Gibberella zeae (strain ATCC MYA-4620 / CBS 123657 / FGSC 9075 / NRRL 31084 / PH-1) (Wheat head blight fungus).